Consider the following 781-residue polypeptide: Catenin beta-1 (781 aa).

Ala-2 carries the post-translational modification N-acetylalanine. The segment at 2-23 (ATQADLMELDMAMEPDRKAAVS) is interaction with VCL. Position 23 is a phosphoserine; by GSK3-beta; alternate (Ser-23). O-linked (GlcNAc) serine; alternate glycosylation is present at Ser-23. Ser-29 is subject to Phosphoserine; by GSK3-beta. 2 positions are modified to phosphoserine; by GSK3-beta and HIPK2: Ser-33 and Ser-37. The disordered stretch occupies residues 34-56 (GIHSGATTTAPSLSGKGNPEEED). A Phosphothreonine; by GSK3-beta modification is found at Thr-41. Ser-45 is modified (phosphoserine). Residue Lys-49 is modified to N6-acetyllysine. The residue at position 64 (Tyr-64) is a Phosphotyrosine; by PTK6. A Phosphotyrosine; by FYN and PTK6 modification is found at Tyr-142. 12 ARM repeats span residues 151–191 (RAIP…IMRS), 193–234 (QMVS…IFKS), 235–276 (GGIP…VRLA), 277–318 (GGLQ…ILAS), 319–360 (GGPQ…IVEA), 361–389 (GGMQ…RNLS), 400–441 (GLLG…VCQV), 442–484 (GGIE…AQNA), 489–530 (YGLP…LREQ), 531–571 (GAIP…EIVE), 594–636 (NTIP…AEGA), and 637–666 (TAPL…SEDK). Positions 156 to 178 (LTKLLNDEDQVVVNKAAVMVHQL) are interaction with BCL9. Ser-191 carries the post-translational modification Phosphoserine; by CDK5. Position 246 is a phosphoserine; by CDK5 (Ser-246). A phosphotyrosine mark is found at Tyr-331 and Tyr-333. Ser-552 is modified (phosphoserine; by AMPK). Thr-556 is subject to Phosphothreonine. Cys-619 carries the S-nitrosocysteine modification. Ser-675 is modified (phosphoserine). Positions 705-781 (EPLGYRQDDP…NQLAWFDTDL (77 aa)) are disordered. Residues 734-745 (MMEHEMGGHHPG) are compositionally biased toward basic and acidic residues. The tract at residues 772-781 (NQLAWFDTDL) is interaction with SCRIB.

Belongs to the beta-catenin family. Two separate complex-associated pools are found in the cytoplasm. The majority is present as component of an E-cadherin/ catenin adhesion complex composed of at least E-cadherin/CDH1 and beta-catenin/CTNNB1, and possibly alpha-catenin/CTNNA1; the complex is located to adherens junctions. The stable association of CTNNA1 is controversial as CTNNA1 was shown not to bind to F-actin when assembled in the complex. Alternatively, the CTNNA1-containing complex may be linked to F-actin by other proteins such as LIMA1. Another cytoplasmic pool is part of a large complex containing AXIN1, AXIN2, APC, CSNK1A1 and GSK3B that promotes phosphorylation on N-terminal Ser and Thr residues and ubiquitination of CTNNB1 via BTRC and its subsequent degradation by the proteasome. Wnt-dependent activation of DVL antagonizes the action of GSK3B. When GSK3B activity is inhibited the complex dissociates, CTNNB1 is dephosphorylated and is no longer targeted for destruction. The stabilized protein translocates to the nucleus, where it binds TCF/LEF-1 family members, BCL9, BCL9L and possibly also RUVBL1 and CHD8. Binds CTNNBIP and EP300. CTNNB1 forms a ternary complex with LEF1 and EP300 that is disrupted by CTNNBIP1 binding. Interacts with TAX1BP3 (via the PDZ domain); this interaction inhibits the transcriptional activity of CTNNB1. Interacts with AJAP1, BAIAP1, CARM1, CTNNA3, CXADR and PCDH11Y. Binds NHERF1. Interacts with GLIS2 and SLC30A9. Interacts with XIRP1 and MUC1. Interacts with PTPRU (via the cytoplasmic juxtamembrane domain) and with EMD. Interacts with SCRIB. Interacts with TNIK. Interacts with SESTD1 and TRPC4. Interacts directly with AXIN1; the interaction is regulated by CDK2 phosphorylation of AXIN1. Interacts with CAV1. Interacts with TRPV4. The TRPV4 and CTNNB1 complex can interact with CDH1. Interacts with VCL. Interacts with PTPRJ. Interacts with PKT7. Interacts with FAT1 (via the cytoplasmic domain). Interacts with NANOS1 and NDRG2. Interacts with NEK2, CDK2 and CDK5. Interacts with PTK6. Interacts with SOX7; this interaction may lead to proteasomal degradation of active CTNNB1 and thus inhibition of Wnt/beta-catenin-stimulated transcription. Identified in a complex with HINT1 and MITF. Interacts with FHIT. The CTNNB1 and TCF4 complex interacts with PML. Interacts with FERMT2. Identified in a complex with TCF4 and FERMT2. Interacts with RORA. May interact with P-cadherin/CDH3. Interacts with RAPGEF2. Interacts with RNF220. Interacts with CTNND2. Interacts (via the C-terminal region) with CBY1. The complex composed, at least, of APC, CTNNB1 and GSK3B interacts with JPT1; the interaction requires the inactive form of GSK3B (phosphorylated at 'Ser-9'). Interacts with DLG5. Interacts with FAM53B; promoting translocation to the nucleus. Interacts with TMEM170B. Interacts with AHI1. Interacts with GID8. Component of an cadherin:catenin adhesion complex composed of at least of CDH26, beta-catenin/CTNNB1, alpha-catenin/CTNNA1 and p120 catenin/CTNND1. Forms a complex comprising APPL1, RUVBL2, APPL2, HDAC1 and HDAC2. Interacts with IRF2BPL; mediates the ubiquitination and degradation of CTNNB1. Interacts with LMBR1L and AMFR. Interacts with LMBR1L. Interacts with SOX30; prevents interaction of CTNNB1 with TCF7L2/TCF4 and leads to inhibition of Wnt signaling. Interacts with SOX9; inhibiting CTNNB1 activity by competing with the binding sites of TCF/LEF within CTNNB1, thereby inhibiting the Wnt signaling. Interacts with SPN/CD43 cytoplasmic tail. Interacts (when phosphorylated at Tyr-333) with isoform M2 of PKM (PKM2); promoting transcription activation. Interacts with PKP2 (via HEAD domain). Interacts with CDH1. Interacts (when unphosphorylated) with FLYWCH1, perhaps preventing interaction of CTNNB1 with TCF4, and thereby regulating transcription activation; phosphorylation of CTNNB1 may inhibit the interaction. Interacts (via the central armadillo domains) with probable transcriptional regulator ADNP (via N-terminal region); interaction is direct and stabilizes CTNNB1 by modulating its phosphorylation by glycogen synthase kinase-3 beta GSK3B. Interacts with NR5A2. Interacts with DSG2; the interaction promotes localization of CTNNB1 at cell junctions thus reducing its nuclear localization and subsequent transcription of CTNNB1/TCF-target genes. In terms of processing, phosphorylation by GSK3B requires prior phosphorylation of Ser-45 by another kinase. Phosphorylation proceeds then from Thr-41 to Ser-33. Phosphorylated by NEK2. EGF stimulates tyrosine phosphorylation. Phosphorylated on Ser-33 and Ser-37 by HIPK2. This phosphorylation triggers proteasomal degradation. Phosphorylation at Ser-552 by AMPK promotes stabilization of the protein, enhancing TCF/LEF-mediated transcription. Phosphorylation on Ser-191 and Ser-246 by CDK5. Phosphorylation by CDK2 regulates insulin internalization. Phosphorylation by PTK6 at Tyr-64, Tyr-142, Tyr-331 and/or Tyr-333 with the predominant site at Tyr-64 is not essential for inhibition of transcriptional activity. Phosphorylation by SRC at Tyr-333 promotes interaction with isoform M2 of PKM (PKM2); promoting transcription activation. Post-translationally, ubiquitinated by the SCF(BTRC) E3 ligase complex when phosphorylated by GSK3B, leading to its degradation. Ubiquitinated by a E3 ubiquitin ligase complex containing UBE2D1, SIAH1, CACYBP/SIP, SKP1, APC and TBL1X, leading to its subsequent proteasomal degradation. Ubiquitinated and degraded following interaction with SOX9. Ubiquitinated via 'Lys-11'- and 'Lys-29'-linked ubiquitin chains by UBR5, leading to its stabilization. S-nitrosylation at Cys-619 within adherens junctions promotes VEGF-induced, NO-dependent endothelial cell permeability by disrupting interaction with E-cadherin, thus mediating disassembly adherens junctions. In terms of processing, O-glycosylation at Ser-23 decreases nuclear localization and transcriptional activity, and increases localization to the plasma membrane and interaction with E-cadherin CDH1. Post-translationally, deacetylated at Lys-49 by SIRT1.

Its subcellular location is the cytoplasm. It is found in the nucleus. It localises to the cytoskeleton. The protein resides in the cell junction. The protein localises to the adherens junction. Its subcellular location is the cell membrane. It is found in the microtubule organizing center. It localises to the centrosome. The protein resides in the spindle pole. The protein localises to the synapse. Its subcellular location is the cilium basal body. Functionally, key downstream component of the canonical Wnt signaling pathway. In the absence of Wnt, forms a complex with AXIN1, AXIN2, APC, CSNK1A1 and GSK3B that promotes phosphorylation on N-terminal Ser and Thr residues and ubiquitination of CTNNB1 via BTRC and its subsequent degradation by the proteasome. In the presence of Wnt ligand, CTNNB1 is not ubiquitinated and accumulates in the nucleus, where it acts as a coactivator for transcription factors of the TCF/LEF family, leading to activate Wnt responsive genes. Also acts as a coactivator for other transcription factors, such as NR5A2. Promotes epithelial to mesenchymal transition/mesenchymal to epithelial transition (EMT/MET) via driving transcription of CTNNB1/TCF-target genes. Involved in the regulation of cell adhesion, as component of an E-cadherin:catenin adhesion complex. Acts as a negative regulator of centrosome cohesion. Involved in the CDK2/PTPN6/CTNNB1/CEACAM1 pathway of insulin internalization. Blocks anoikis of malignant kidney and intestinal epithelial cells and promotes their anchorage-independent growth by down-regulating DAPK2. Disrupts PML function and PML-NB formation by inhibiting RANBP2-mediated sumoylation of PML. Promotes neurogenesis by maintaining sympathetic neuroblasts within the cell cycle. Involved in chondrocyte differentiation via interaction with SOX9: SOX9-binding competes with the binding sites of TCF/LEF within CTNNB1, thereby inhibiting the Wnt signaling. Acts as a positive regulator of odontoblast differentiation during mesenchymal tooth germ formation, via promoting the transcription of differentiation factors such as LEF1, BMP2 and BMP4. Activity is repressed in a MSX1-mediated manner at the bell stage of mesenchymal tooth germ formation which prevents premature differentiation of odontoblasts. This chain is Catenin beta-1, found in Bos taurus (Bovine).